Consider the following 303-residue polypeptide: Glyceraldehyde-3-phosphate dehydrogenase (303 aa).

Residues Arg-6 to Ile-7, Asp-28, Arg-72, and Thr-114 each bind NAD(+). Residues Ser-143 to Thr-145, Thr-174, Thr-203 to Gly-204, and Arg-226 each bind D-glyceraldehyde 3-phosphate. The active-site Nucleophile is the Cys-144.

Belongs to the glyceraldehyde-3-phosphate dehydrogenase family. In terms of assembly, homotetramer.

It is found in the cytoplasm. The catalysed reaction is D-glyceraldehyde 3-phosphate + phosphate + NAD(+) = (2R)-3-phospho-glyceroyl phosphate + NADH + H(+). The protein operates within carbohydrate degradation; glycolysis; pyruvate from D-glyceraldehyde 3-phosphate: step 1/5. Functionally, catalyzes the oxidative phosphorylation of glyceraldehyde 3-phosphate (G3P) to 1,3-bisphosphoglycerate (BPG) using the cofactor NAD. The first reaction step involves the formation of a hemiacetal intermediate between G3P and a cysteine residue, and this hemiacetal intermediate is then oxidized to a thioester, with concomitant reduction of NAD to NADH. The reduced NADH is then exchanged with the second NAD, and the thioester is attacked by a nucleophilic inorganic phosphate to produce BPG. This chain is Glyceraldehyde-3-phosphate dehydrogenase (gap), found in Klebsiella pneumoniae.